Consider the following 424-residue polypeptide: Serine--tRNA ligase (424 aa).

232–234 (TAE) serves as a coordination point for L-serine. 263–265 (RQE) serves as a coordination point for ATP. Glutamate 286 contributes to the L-serine binding site. 350-353 (EIGS) contributes to the ATP binding site. Residue serine 386 participates in L-serine binding.

It belongs to the class-II aminoacyl-tRNA synthetase family. Type-1 seryl-tRNA synthetase subfamily. Homodimer. The tRNA molecule binds across the dimer.

It is found in the cytoplasm. The catalysed reaction is tRNA(Ser) + L-serine + ATP = L-seryl-tRNA(Ser) + AMP + diphosphate + H(+). The enzyme catalyses tRNA(Sec) + L-serine + ATP = L-seryl-tRNA(Sec) + AMP + diphosphate + H(+). The protein operates within aminoacyl-tRNA biosynthesis; selenocysteinyl-tRNA(Sec) biosynthesis; L-seryl-tRNA(Sec) from L-serine and tRNA(Sec): step 1/1. In terms of biological role, catalyzes the attachment of serine to tRNA(Ser). Is also able to aminoacylate tRNA(Sec) with serine, to form the misacylated tRNA L-seryl-tRNA(Sec), which will be further converted into selenocysteinyl-tRNA(Sec). The chain is Serine--tRNA ligase from Onion yellows phytoplasma (strain OY-M).